The sequence spans 704 residues: Probable serine/threonine-protein kinase WNK1 (704 aa).

The 258-residue stretch at Gly-27 to Leu-284 folds into the Protein kinase domain. ATP-binding positions include Thr-107 to Phe-110 and Lys-157. Residue Asp-174 is the Proton acceptor of the active site. Positions Gln-499–Asp-521 are disordered.

Belongs to the protein kinase superfamily. Ser/Thr protein kinase family. WNK subfamily.

The enzyme catalyses L-seryl-[protein] + ATP = O-phospho-L-seryl-[protein] + ADP + H(+). It carries out the reaction L-threonyl-[protein] + ATP = O-phospho-L-threonyl-[protein] + ADP + H(+). The sequence is that of Probable serine/threonine-protein kinase WNK1 (WNK1) from Oryza sativa subsp. japonica (Rice).